Consider the following 447-residue polypeptide: N-succinylarginine dihydrolase (447 aa).

Substrate contacts are provided by residues 19 to 28, Asn110, and 137 to 138; these read AGLSFGNEAS and HR. The active site involves Glu174. Arg212 provides a ligand contact to substrate. His248 is an active-site residue. Residues Asp250 and Asn359 each contribute to the substrate site. Catalysis depends on Cys365, which acts as the Nucleophile.

Belongs to the succinylarginine dihydrolase family. In terms of assembly, homodimer.

It carries out the reaction N(2)-succinyl-L-arginine + 2 H2O + 2 H(+) = N(2)-succinyl-L-ornithine + 2 NH4(+) + CO2. It functions in the pathway amino-acid degradation; L-arginine degradation via AST pathway; L-glutamate and succinate from L-arginine: step 2/5. Its function is as follows. Catalyzes the hydrolysis of N(2)-succinylarginine into N(2)-succinylornithine, ammonia and CO(2). The protein is N-succinylarginine dihydrolase of Escherichia coli O6:K15:H31 (strain 536 / UPEC).